A 305-amino-acid chain; its full sequence is Type II secretion system protein C (305 aa).

Residues 1 to 29 (MEFKQLPPLAAWPRLLSQNTLRWQKPISE) lie on the Cytoplasmic side of the membrane. Residues 30–50 (GLTLLLLVASAWTLGKMVWVV) traverse the membrane as a helical segment. The Periplasmic portion of the chain corresponds to 51-305 (SAEQTPVPTW…GQQHDVYIQF (255 aa)).

It belongs to the GSP C family.

The protein resides in the cell inner membrane. Functionally, involved in a type II secretion system (T2SS, formerly general secretion pathway, GSP) for the export of proteins. Required for secretion of cholera toxin through the outer membrane. This Vibrio cholerae serotype O1 (strain ATCC 39315 / El Tor Inaba N16961) protein is Type II secretion system protein C (epsC).